The sequence spans 378 residues: UPF0754 membrane protein BCE33L0760 (378 aa).

2 consecutive transmembrane segments (helical) span residues 1-21 (MNIW…GGFT) and 357-377 (YLGA…LLFL).

This sequence belongs to the UPF0754 family.

Its subcellular location is the cell membrane. The protein is UPF0754 membrane protein BCE33L0760 of Bacillus cereus (strain ZK / E33L).